A 279-amino-acid chain; its full sequence is Tryptophan 2,3-dioxygenase (279 aa).

Substrate is bound by residues F48–H52, Y110, and R114. H237 is a heme binding site. T251 contributes to the substrate binding site.

It belongs to the tryptophan 2,3-dioxygenase family. Homotetramer. Heme is required as a cofactor.

It catalyses the reaction L-tryptophan + O2 = N-formyl-L-kynurenine. Its pathway is amino-acid degradation; L-tryptophan degradation via kynurenine pathway; L-kynurenine from L-tryptophan: step 1/2. Its function is as follows. Heme-dependent dioxygenase that catalyzes the oxidative cleavage of the L-tryptophan (L-Trp) pyrrole ring and converts L-tryptophan to N-formyl-L-kynurenine. Catalyzes the oxidative cleavage of the indole moiety. This chain is Tryptophan 2,3-dioxygenase, found in Bradyrhizobium diazoefficiens (strain JCM 10833 / BCRC 13528 / IAM 13628 / NBRC 14792 / USDA 110).